A 349-amino-acid polypeptide reads, in one-letter code: 4-hydroxy-3-methylbut-2-en-1-yl diphosphate synthase (flavodoxin) (349 aa).

[4Fe-4S] cluster-binding residues include Cys-264, Cys-267, Cys-299, and Glu-306.

The protein belongs to the IspG family. The cofactor is [4Fe-4S] cluster.

It carries out the reaction (2E)-4-hydroxy-3-methylbut-2-enyl diphosphate + oxidized [flavodoxin] + H2O + 2 H(+) = 2-C-methyl-D-erythritol 2,4-cyclic diphosphate + reduced [flavodoxin]. It functions in the pathway isoprenoid biosynthesis; isopentenyl diphosphate biosynthesis via DXP pathway; isopentenyl diphosphate from 1-deoxy-D-xylulose 5-phosphate: step 5/6. In terms of biological role, converts 2C-methyl-D-erythritol 2,4-cyclodiphosphate (ME-2,4cPP) into 1-hydroxy-2-methyl-2-(E)-butenyl 4-diphosphate. This is 4-hydroxy-3-methylbut-2-en-1-yl diphosphate synthase (flavodoxin) from Clostridium tetani (strain Massachusetts / E88).